Consider the following 357-residue polypeptide: MNLCRECYGIIGEGVVAEKCEACCNAFDRVEEFAEEIVKKMSEYEFETFNVGSRVWGSLKALQEYLSLKGIEYEIKQRFNTKLARAIEEKTGSKRTLNPDITVLFDLETFTFELQIRPVFIYGRYLKRVRNISQTRWLCGYCNGEGCEVCNFTGKKYVSSVEELIAMPAVRLFKARDAKLHGAGREDVDARMLGTGRPFVLEVIEPRKRFVDLKELEEAINSQKWVAVRDLEYTDAEKVREVKTERHRKTYRAKVVFEEKVERERLIEALESLKGEIRQRTPMRVSHRRADRVRVRRLYDARLIHHTGRVAVVEFEAEAGLYIKELVSGDNGRTRPSLAEKVGVNARVDRLDVIAVS.

The region spanning 1–118 (MNLCRECYGI…TFTFELQIRP (118 aa)) is the THUMP domain. Asp187 (nucleophile) is an active-site residue. Residues Tyr251 and Tyr322 each coordinate substrate.

The protein belongs to the pseudouridine synthase Pus10 family.

It carries out the reaction uridine(54) in tRNA = pseudouridine(54) in tRNA. The catalysed reaction is uridine(55) in tRNA = pseudouridine(55) in tRNA. Responsible for synthesis of pseudouridine from uracil-54 and uracil-55 in the psi GC loop of transfer RNAs. This chain is tRNA pseudouridine synthase Pus10, found in Archaeoglobus fulgidus (strain ATCC 49558 / DSM 4304 / JCM 9628 / NBRC 100126 / VC-16).